We begin with the raw amino-acid sequence, 355 residues long: Magnesium-chelatase subunit ChlI (355 aa).

47–54 contributes to the ATP binding site; the sequence is GDRGTGKS.

This sequence belongs to the Mg-chelatase subunits D/I family.

Its subcellular location is the plastid. The protein resides in the chloroplast. It carries out the reaction protoporphyrin IX + Mg(2+) + ATP + H2O = Mg-protoporphyrin IX + ADP + phosphate + 3 H(+). It participates in porphyrin-containing compound metabolism; chlorophyll biosynthesis. Involved in chlorophyll biosynthesis; introduces a magnesium ion into protoporphyrin IX to yield Mg-protoporphyrin IX. The polypeptide is Magnesium-chelatase subunit ChlI (chlI) (Pyropia yezoensis (Susabi-nori)).